Reading from the N-terminus, the 703-residue chain is Histone-lysine N-methyltransferase SETDB2 (703 aa).

Residues 178-248 (FTKGNPLQLP…DNFSFNNHVR (71 aa)) form the MBD domain. Residues 310 to 384 (KCCNCTDGCL…LCQNRVVQHG (75 aa)) enclose the Pre-SET domain. 9 residues coordinate Zn(2+): Cys312, Cys314, Cys318, Cys324, Cys326, Cys365, Cys369, Cys371, and Cys376. Residues 387–678 (LRLQVFKTNT…AGTELTWDYS (292 aa)) enclose the SET domain. Position 397 to 399 (397 to 399 (KGW)) interacts with S-adenosyl-L-methionine. Residues 492–588 (TFSPRQARSG…SSSVISGGHP (97 aa)) are disordered. Over residues 511-525 (RRPKTKTSMLQKRRR) the composition is skewed to basic residues. Over residues 550–560 (PEQKSSAGTKI) the composition is skewed to polar residues. Low complexity predominate over residues 571–586 (SGYVSEESSSSVISGG). Residues Arg632 and 635–636 (NH) each bind S-adenosyl-L-methionine. Residues Cys638, Cys691, Cys693, and Cys698 each coordinate Zn(2+).

The protein belongs to the class V-like SAM-binding methyltransferase superfamily.

The protein resides in the nucleus. It is found in the chromosome. It carries out the reaction N(6),N(6)-dimethyl-L-lysyl(9)-[histone H3] + S-adenosyl-L-methionine = N(6),N(6),N(6)-trimethyl-L-lysyl(9)-[histone H3] + S-adenosyl-L-homocysteine + H(+). Its function is as follows. Histone methyltransferase involved in left-right axis specification in early development and mitosis. Specifically trimethylates 'Lys-9' of histone H3 (H3K9me3). H3K9me3 is a specific tag for epigenetic transcriptional repression that recruits HP1 (CBX1, CBX3 and/or CBX5) proteins to methylated histones. Contributes to H3K9me3 in both the interspersed repetitive elements and centromere-associated repeats. Plays a role in chromosome condensation and segregation during mitosis. In Xenopus laevis (African clawed frog), this protein is Histone-lysine N-methyltransferase SETDB2 (setdb2).